Here is a 736-residue protein sequence, read N- to C-terminus: Dimethylamine dehydrogenase (736 aa).

Cys-31 carries the S-6-FMN cysteine modification. Residue 176–179 (YGAH) participates in substrate binding. The active-site Proton donor is the Tyr-181. 2 residues coordinate FMN: Arg-229 and Arg-329. Positions 352, 355, 358, and 371 each coordinate [4Fe-4S] cluster. Residue 398 to 427 (DVLIVGAGPAGSECARVLMERGYTVHLVDT) coordinates ADP.

It in the N-terminal section; belongs to the NADH:flavin oxidoreductase/NADH oxidase family. FMN serves as cofactor. It depends on [4Fe-4S] cluster as a cofactor.

The catalysed reaction is dimethylamine + oxidized [electron-transfer flavoprotein] + H2O + H(+) = methylamine + reduced [electron-transfer flavoprotein] + formaldehyde. In Hyphomicrobium sp. (strain x), this protein is Dimethylamine dehydrogenase (dmd).